The sequence spans 343 residues: Cilia- and flagella-associated protein 36 (343 aa).

Phosphoserine is present on residues serine 85 and serine 147. The stretch at 147–181 (SDLEQEEMKILREVLRKSKEEYDQEEERKRKKQSS) forms a coiled coil. The interval 165 to 191 (KEEYDQEEERKRKKQSSEGKMEEPPIY) is disordered. Residue serine 201 is modified to Phosphoserine. A disordered region spans residues 286–323 (SMRKDMRAKQIQNTEQKGKPTREAEEMTEKPEMTAEEK). Over residues 301 to 323 (QKGKPTREAEEMTEKPEMTAEEK) the composition is skewed to basic and acidic residues.

It belongs to the CFAP36 family. In terms of assembly, interacts with ARL3. Widely expressed (at protein level).

It is found in the nucleus. It localises to the cytoplasm. The protein localises to the cell projection. The protein resides in the cilium. Its subcellular location is the flagellum. May act as an effector for ARL3. The chain is Cilia- and flagella-associated protein 36 from Rattus norvegicus (Rat).